Reading from the N-terminus, the 881-residue chain is Translation initiation factor IF-2 (881 aa).

Disordered regions lie at residues 53 to 92 (RSHG…SKTT) and 163 to 292 (AEAE…FERP). The segment covering 81 to 92 (EVTVNSGRSKTT) has biased composition (polar residues). Low complexity predominate over residues 172-186 (EAAAAAKAAEALAAA). Positions 219–236 (RNDDRNNRSAPRNERGPG) are enriched in basic and acidic residues. A compositionally biased stretch (low complexity) spans 254–263 (GNSNNSNTRG). In terms of domain architecture, tr-type G spans 380-549 (QRPPVVTIMG…SIQAELLELK (170 aa)). Residues 389–396 (GHVDHGKT) form a G1 region. A GTP-binding site is contributed by 389-396 (GHVDHGKT). Positions 414-418 (GITQH) are G2. Residues 435-438 (DTPG) are G3. Residues 435 to 439 (DTPGH) and 489 to 492 (NKID) contribute to the GTP site. Residues 489 to 492 (NKID) are G4. The interval 525 to 527 (SAK) is G5.

The protein belongs to the TRAFAC class translation factor GTPase superfamily. Classic translation factor GTPase family. IF-2 subfamily.

Its subcellular location is the cytoplasm. In terms of biological role, one of the essential components for the initiation of protein synthesis. Protects formylmethionyl-tRNA from spontaneous hydrolysis and promotes its binding to the 30S ribosomal subunits. Also involved in the hydrolysis of GTP during the formation of the 70S ribosomal complex. The protein is Translation initiation factor IF-2 of Stenotrophomonas maltophilia (strain K279a).